Reading from the N-terminus, the 250-residue chain is Probable 2' cyclic ADP-D-ribose synthase TcpB (250 aa).

The disordered stretch occupies residues Met-1–Lys-46. Low complexity predominate over residues Ala-14–Ser-23. The span at Lys-30–Arg-39 shows a compositional bias: basic and acidic residues. Residues Glu-117–Ile-250 form the TIR domain. Glu-192 is a catalytic residue.

In terms of assembly, homodimer. Interacts with host TIRAP. Interacts with host TLR4, abolishes the interaction of host TIRAP with TLR4.

It localises to the secreted. It is found in the host cell membrane. The catalysed reaction is NAD(+) + H2O = ADP-D-ribose + nicotinamide + H(+). It carries out the reaction NAD(+) = 2'cADPR + nicotinamide + H(+). Virulence factor that interferes with host Toll-like receptor 2 (TLR2) signaling, resulting in the reduction of dendritic cell maturation, inhibition of pro-inflammatory cytokine secretion and impaired NF-kappa-B activation in macrophages. Also acts on host TLR4. Binds host lipids. Has NAD(+) hydrolase (NADase) activity, catalyzes cleavage of NAD(+) into ADP-D-ribose (ADPR) and nicotinamide, also generates a cyclization variant of cyclic ADPR (cADPR), termed v-cADPR (probably 2'cADPR). In Brucella abortus (strain 2308), this protein is Probable 2' cyclic ADP-D-ribose synthase TcpB.